We begin with the raw amino-acid sequence, 37 residues long: U10-ctenitoxin-Co1a (37 aa).

4 cysteine pairs are disulfide-bonded: Cys2/Cys17, Cys9/Cys22, Cys16/Cys33, and Cys24/Cys31.

In terms of tissue distribution, expressed by the venom gland.

It is found in the secreted. Functionally, antagonist of L-type calcium channels (Cav1/CACNA1). The sequence is that of U10-ctenitoxin-Co1a from Ctenus ornatus (Brazilian spider).